The primary structure comprises 403 residues: Chorismate synthase (403 aa).

2 residues coordinate NADP(+): Arg40 and Arg46. Residues 140-142 (RSS) and 261-262 (QA) contribute to the FMN site. Residues 277–298 (RRGSEAHDEMVRTDEGVDRETN) are compositionally biased toward basic and acidic residues. The tract at residues 277–307 (RRGSEAHDEMVRTDEGVDRETNRAGGLEGGM) is disordered. Residues Gly305, 320-324 (KPIST), and Arg346 contribute to the FMN site.

Belongs to the chorismate synthase family. As to quaternary structure, homotetramer. FMNH2 is required as a cofactor.

The enzyme catalyses 5-O-(1-carboxyvinyl)-3-phosphoshikimate = chorismate + phosphate. It functions in the pathway metabolic intermediate biosynthesis; chorismate biosynthesis; chorismate from D-erythrose 4-phosphate and phosphoenolpyruvate: step 7/7. Its function is as follows. Catalyzes the anti-1,4-elimination of the C-3 phosphate and the C-6 proR hydrogen from 5-enolpyruvylshikimate-3-phosphate (EPSP) to yield chorismate, which is the branch point compound that serves as the starting substrate for the three terminal pathways of aromatic amino acid biosynthesis. This reaction introduces a second double bond into the aromatic ring system. This is Chorismate synthase from Corynebacterium aurimucosum (strain ATCC 700975 / DSM 44827 / CIP 107346 / CN-1) (Corynebacterium nigricans).